Here is a 300-residue protein sequence, read N- to C-terminus: GTPase Era (300 aa).

In terms of domain architecture, Era-type G spans 7–175; it reads KSGFAVMAGL…KTAVAETLPF (169 aa). Residues 15-22 are G1; that stretch reads GLPNAGKS. 15 to 22 is a binding site for GTP; it reads GLPNAGKS. Residues 41-45 form a G2 region; the sequence is QMTRQ. Positions 62 to 65 are G3; sequence DTPG. GTP-binding positions include 62-66 and 124-127; these read DTPGF and NKAD. The G4 stretch occupies residues 124–127; sequence NKAD. Residues 154–156 form a G5 region; that stretch reads ISA. Residues 198–283 enclose the KH type-2 domain; sequence IREQIFNLYE…RLELEVSVEP (86 aa).

The protein belongs to the TRAFAC class TrmE-Era-EngA-EngB-Septin-like GTPase superfamily. Era GTPase family. As to quaternary structure, monomer.

The protein resides in the cytoplasm. Its subcellular location is the cell inner membrane. Its function is as follows. An essential GTPase that binds both GDP and GTP, with rapid nucleotide exchange. Plays a role in 16S rRNA processing and 30S ribosomal subunit biogenesis and possibly also in cell cycle regulation and energy metabolism. The protein is GTPase Era of Elusimicrobium minutum (strain Pei191).